A 751-amino-acid polypeptide reads, in one-letter code: Serine/threonine-protein kinase B-raf (751 aa).

Positions 1-32 are enriched in gly residues; that stretch reads MAALSGGGGSSSGGGGGGGGGGGGGDGGGGAE. Positions 1–55 are disordered; it reads MAALSGGGGSSSGGGGGGGGGGGGGDGGGGAEQGQALFNGDMEPEAGAGAAASSA. Ala-2 carries the N-acetylalanine modification. Low complexity predominate over residues 46–55; the sequence is AGAGAAASSA. Ser-135 bears the Phosphoserine mark. The 73-residue stretch at 139-211 folds into the RBD domain; the sequence is PIVRVFLPNK…TGEELHVEVL (73 aa). The Zn(2+) site is built by His-219, Cys-232, Cys-235, Cys-245, Cys-248, His-253, Cys-256, and Cys-264. Residues 288-440 are disordered; sequence EASFPETALP…SSDDWEIPDG (153 aa). Over residues 297–324 the composition is skewed to low complexity; sequence PSGSSSAPPSDSTGPQILTSPSPSKSIP. Ser-316 is subject to Phosphoserine. Over residues 331 to 346 the composition is skewed to basic and acidic residues; sequence PADEDHRNQFGQRDRS. Ser-348 carries the phosphoserine modification. Position 356 is a phosphothreonine; by autocatalysis (Thr-356). Phosphothreonine is present on Thr-379. Residue Ser-382 is modified to Phosphoserine. A Phosphothreonine modification is found at Thr-384. Residues 406-432 are compositionally biased toward basic and acidic residues; it reads QRERKSSSSSSSEDRSRMKTLGRRDSS. Phosphoserine occurs at positions 431 and 432. The 261-residue stretch at 442 to 702 folds into the Protein kinase domain; sequence ITVGQRIGSG…PQILASIELL (261 aa). ATP contacts are provided by residues 448-456 and Lys-468; that span reads IGSGSFGTV. Asp-561 acts as the Proton acceptor in catalysis. Lys-563 participates in a covalent cross-link: Glycyl lysine isopeptide (Lys-Gly) (interchain with G-Cter in ubiquitin). Residue Arg-656 is modified to Omega-N-methylarginine; by PRMT5. Phosphoserine occurs at positions 714 and 735. Phosphothreonine; by MAPK1 is present on Thr-738.

It belongs to the protein kinase superfamily. TKL Ser/Thr protein kinase family. RAF subfamily. In terms of assembly, monomer. Homodimer. Heterodimerizes with RAF1, and the heterodimer possesses a highly increased kinase activity compared to the respective homodimers or monomers. Heterodimerization is mitogen-regulated and enhanced by 14-3-3 proteins. MAPK1/ERK2 activation can induce a negative feedback that promotes the dissociation of the heterodimer by phosphorylating BRAF at Thr-738. Heterodimerizes (via N-terminus) with KSR1 (via N-terminus) or KSR2 (via N-terminus) in a MAP2K1-dependent manner. Interacts with MAP2K1 and MAP2K2. Found in a complex with at least BRAF, HRAS, MAP2K1, MAPK3 and RGS14. Interacts with RIT1. Interacts (via N-terminus) with RGS14 (via RBD domains); the interaction mediates the formation of a ternary complex with RAF1, a ternary complex inhibited by GNAI1. Interacts with DGKH. Interacts with PRMT5. Interacts with AKAP13, MAP2K1 and KSR1. Identified in a complex with AKAP13, KSR1 and MAP2K1. Interacts with FNIP1 and FNIP2. Zn(2+) serves as cofactor. Post-translationally, phosphorylation at Ser-348 by SGK1 inhibits its activity. Dephosphorylation of Ser-348 by the SHOC2-MRAS-PP1c (SMP) complex consisting of SHOC2, GTP-bound M-Ras/MRAS and the catalytic subunit of protein phosphatase 1 (PPP1CA, PPP1CB or PPP1CC); this relieves inactivation and stimulates kinase activity. In terms of processing, methylation by PRMT5 decreases stability and kinase activity. Ubiquitinated by RNF149; which leads to proteasomal degradation. Polyubiquitinated at Lys-615 in response to EGF.

The protein localises to the nucleus. Its subcellular location is the cytoplasm. It is found in the cell membrane. The catalysed reaction is L-seryl-[protein] + ATP = O-phospho-L-seryl-[protein] + ADP + H(+). It carries out the reaction L-threonyl-[protein] + ATP = O-phospho-L-threonyl-[protein] + ADP + H(+). In quiescent cells, maintained in an inactive state via an intramolecular interaction between the protein kinase and N-terminal domains. Following mitogen-mediated cell activation, binds via its RGB domain to active HRAS (GTP-bound) which releases the inhibitory intramolecular interaction between the two domains. This allows the MAP2K1-mediated dimerization of KSR1 or KSR2, and BRAF which activates BRAF. Its function is as follows. Involved in the transduction of mitogenic signals from the cell membrane to the nucleus. Phosphorylates MAP2K1, and thereby activates the MAP kinase signal transduction pathway. Phosphorylates PFKFB2. May play a role in the postsynaptic responses of hippocampal neurons. This Mus musculus (Mouse) protein is Serine/threonine-protein kinase B-raf.